The following is a 31-amino-acid chain: Protamine PTP4 (31 aa).

A disordered region spans residues 1–31 (MPRRRRASRRIRRRRRPRVSRRRRGGRRRRR).

As to expression, testis.

It localises to the nucleus. The protein localises to the chromosome. Its function is as follows. Protamines substitute for histones in the chromatin of sperm during the haploid phase of spermatogenesis. They compact sperm DNA into a highly condensed, stable and inactive complex. The chain is Protamine PTP4 from Oncorhynchus mykiss (Rainbow trout).